The chain runs to 415 residues: Esterase FrsA (415 aa).

The segment at 1–23 is disordered; it reads MANRNLSESLFKPRQKHQETSTL.

This sequence belongs to the FrsA family.

The catalysed reaction is a carboxylic ester + H2O = an alcohol + a carboxylate + H(+). Functionally, catalyzes the hydrolysis of esters. In Photorhabdus laumondii subsp. laumondii (strain DSM 15139 / CIP 105565 / TT01) (Photorhabdus luminescens subsp. laumondii), this protein is Esterase FrsA.